The sequence spans 332 residues: Tyrosine--tRNA ligase (332 aa).

L-tyrosine contacts are provided by tyrosine 32, tyrosine 156, glutamine 160, aspartate 163, and glutamine 178. Positions 219–223 match the 'KMSKS' region motif; that stretch reads KMSKS. Position 222 (lysine 222) interacts with ATP.

This sequence belongs to the class-I aminoacyl-tRNA synthetase family. TyrS type 4 subfamily. As to quaternary structure, homodimer.

The protein localises to the cytoplasm. The enzyme catalyses tRNA(Tyr) + L-tyrosine + ATP = L-tyrosyl-tRNA(Tyr) + AMP + diphosphate + H(+). In terms of biological role, catalyzes the attachment of tyrosine to tRNA(Tyr) in a two-step reaction: tyrosine is first activated by ATP to form Tyr-AMP and then transferred to the acceptor end of tRNA(Tyr). This is Tyrosine--tRNA ligase from Thermoplasma acidophilum (strain ATCC 25905 / DSM 1728 / JCM 9062 / NBRC 15155 / AMRC-C165).